Consider the following 138-residue polypeptide: Large ribosomal subunit protein uL14 (138 aa).

It belongs to the universal ribosomal protein uL14 family. As to quaternary structure, part of the 50S ribosomal subunit. Forms a cluster with proteins L3 and L24e, part of which may contact the 16S rRNA in 2 intersubunit bridges.

In terms of biological role, binds to 23S rRNA. Forms part of two intersubunit bridges in the 70S ribosome. The polypeptide is Large ribosomal subunit protein uL14 (Hyperthermus butylicus (strain DSM 5456 / JCM 9403 / PLM1-5)).